The chain runs to 226 residues: PKHD-type hydroxylase MADE_1018490 (226 aa).

One can recognise a Fe2OG dioxygenase domain in the interval 77–177 (RIFPPCFNRY…RIAAITWIQS (101 aa)). Fe cation is bound by residues H95, D97, and H158. R168 serves as a coordination point for 2-oxoglutarate.

Fe(2+) serves as cofactor. L-ascorbate is required as a cofactor.

This is PKHD-type hydroxylase MADE_1018490 from Alteromonas mediterranea (strain DSM 17117 / CIP 110805 / LMG 28347 / Deep ecotype).